Consider the following 413-residue polypeptide: Putative acid phosphatase 11 (413 aa).

Residue H35 is the Nucleophile of the active site. Catalysis depends on D315, which acts as the Proton donor. C381 and C387 are joined by a disulfide.

Belongs to the histidine acid phosphatase family.

The catalysed reaction is a phosphate monoester + H2O = an alcohol + phosphate. This chain is Putative acid phosphatase 11 (pho-11), found in Caenorhabditis elegans.